A 364-amino-acid chain; its full sequence is Transcription factor IIIA (364 aa).

9 C2H2-type zinc fingers span residues 38 to 62, 68 to 92, 98 to 123, 130 to 154, 160 to 184, 187 to 211, 215 to 237, 244 to 269, and 275 to 299; these read FICSFPDCSASYNKAWKLDAHLCKH, FVCDYEGCGKAFIRDYHLSRHVLIH, FVCADDGCNQKFNTKSNLKKHIERKH, YVCSYEGCKKAFKKHQQLRTHQCQH, FRCTHEGCGKHFASPSRLKRHGKVH, YLCQKGCSFMGKTWTELLKHMREAH, ITCNVCQRMFKRRDYLKQHMKTH, YRCPRQGCGRTYTTVFNLQSHILSFH, and FVCEHAGCGKTFAMKQSLMRHSVVH. A disordered region spans residues 299-364; sequence HDPDKKRMKL…PPPAALLTVC (66 aa). Low complexity predominate over residues 338-352; sequence SLPNASAESSSSPEA.

It localises to the nucleus. In terms of biological role, involved in ribosomal large subunit biogenesis. Binds the approximately 50 base pairs internal control region (ICR) of 5S ribosomal RNA genes. It is required for their RNA polymerase III-dependent transcription and may also maintain the transcription of other genes. Also binds the transcribed 5S RNA's. This Mus musculus (Mouse) protein is Transcription factor IIIA (Gtf3a).